A 990-amino-acid polypeptide reads, in one-letter code: Bifunctional glutamine synthetase adenylyltransferase/adenylyl-removing enzyme (990 aa).

Residues 1–474 (MPTDNENSMT…HFNELVEESQ (474 aa)) are adenylyl removase. Residues 484 to 990 (FIACQDAWRL…WDTLFGTCSE (507 aa)) form an adenylyl transferase region.

The protein belongs to the GlnE family. The cofactor is Mg(2+).

The catalysed reaction is [glutamine synthetase]-O(4)-(5'-adenylyl)-L-tyrosine + phosphate = [glutamine synthetase]-L-tyrosine + ADP. It catalyses the reaction [glutamine synthetase]-L-tyrosine + ATP = [glutamine synthetase]-O(4)-(5'-adenylyl)-L-tyrosine + diphosphate. Functionally, involved in the regulation of glutamine synthetase GlnA, a key enzyme in the process to assimilate ammonia. When cellular nitrogen levels are high, the C-terminal adenylyl transferase (AT) inactivates GlnA by covalent transfer of an adenylyl group from ATP to specific tyrosine residue of GlnA, thus reducing its activity. Conversely, when nitrogen levels are low, the N-terminal adenylyl removase (AR) activates GlnA by removing the adenylyl group by phosphorolysis, increasing its activity. The regulatory region of GlnE binds the signal transduction protein PII (GlnB) which indicates the nitrogen status of the cell. The protein is Bifunctional glutamine synthetase adenylyltransferase/adenylyl-removing enzyme of Alteromonas mediterranea (strain DSM 17117 / CIP 110805 / LMG 28347 / Deep ecotype).